Reading from the N-terminus, the 271-residue chain is MTHAPIGIFDSGVGGLTVARAIMDQLPGEALRYVGDTANAPYGPRPLADIRARTLAITDSLVAEGVKMLVIACNSASAACLRDARERYDVPVVEVVLPAVRRAVATTRNGRVGVIGTQATITSRAYDDAFTAAPGVTLSTAACPRFADFVERGITSGRQVLGLAQAYLDPLQQADVDTLVLGCTHYPLLTGVLQLAMGDHVTLVSSAEETAKDVLRVLTEHDLLAEADGEPAHEFRATGSGESFAKLARRFLGPSLAADAIDPLAVSSSSA.

Substrate contacts are provided by residues 10 to 11 and 42 to 43; these read DS and YG. Cys73 functions as the Proton donor/acceptor in the catalytic mechanism. Residue 74–75 coordinates substrate; it reads NS. Residue Cys183 is the Proton donor/acceptor of the active site. 184–185 provides a ligand contact to substrate; it reads TH.

The protein belongs to the aspartate/glutamate racemases family.

The enzyme catalyses L-glutamate = D-glutamate. The protein operates within cell wall biogenesis; peptidoglycan biosynthesis. In terms of biological role, provides the (R)-glutamate required for cell wall biosynthesis. This chain is Glutamate racemase, found in Saccharopolyspora erythraea (strain ATCC 11635 / DSM 40517 / JCM 4748 / NBRC 13426 / NCIMB 8594 / NRRL 2338).